A 227-amino-acid chain; its full sequence is UPF0758 protein PG_0894 (227 aa).

The MPN domain maps to 104–227; that stretch reads SITDSRMAYR…YFSFADEGLL (124 aa). Zn(2+) contacts are provided by His-175, His-177, and Asp-188. Residues 175 to 188 carry the JAMM motif motif; the sequence is HNHPSGTVRPSEQD.

This sequence belongs to the UPF0758 family.

This Porphyromonas gingivalis (strain ATCC BAA-308 / W83) protein is UPF0758 protein PG_0894.